The primary structure comprises 272 residues: Type II secretion system protein C (272 aa).

Residues 1–16 (MNISKLPPLSPSVIRR) are Cytoplasmic-facing. A helical transmembrane segment spans residues 17–35 (ILFYLLMLLFCQQLAMIFW). At 36-272 (RVGLPDNSPV…DIYMEFGGDE (237 aa)) the chain is on the periplasmic side.

This sequence belongs to the GSP C family.

It localises to the cell inner membrane. Its function is as follows. Involved in a type II secretion system (T2SS, formerly general secretion pathway, GSP) for the export of proteins. Required for the translocation of the multiple pectic enzymes. The chain is Type II secretion system protein C (outC) from Dickeya chrysanthemi (Pectobacterium chrysanthemi).